Reading from the N-terminus, the 1058-residue chain is Zinc finger protein 865 (1058 aa).

Disordered regions lie at residues 1-24, 58-134, and 156-201; these read MEAN…EDGV, LPCT…PPLF, and GNLK…ACDP. Positions 8–21 are enriched in gly residues; the sequence is SGAGGGGSSGIGGE. Positions 61 to 78 are enriched in pro residues; sequence TPGPPPQPPPQPPPPQYD. Residues 93-113 are compositionally biased toward low complexity; sequence SSSSSSSSSSSSSSSSSSSSS. Pro residues predominate over residues 120-133; that stretch reads PPLPPTFGAPPPPL. Over residues 172 to 187 the composition is skewed to low complexity; sequence GLGTPTGTPGPLTTPS. C2H2-type zinc fingers lie at residues 220-242 and 248-270; these read FPCG…MLVH and YECG…RRCH. Residues 269–342 form a disordered region; sequence CHKDVPPTPT…PPGVAMPPSA (74 aa). Residues 294–324 show a composition bias toward low complexity; that stretch reads PVSTASATASSDPAAVSSGPSATPATPATST. C2H2-type zinc fingers lie at residues 350-372, 378-400, 407-429, 439-461, 546-568, 574-596, 602-624, 664-686, and 692-714; these read FACS…QIIH, FSCS…VKTH, LPCG…QAAH, YPCD…KAAH, FCCG…ERIH, HQCP…HVVH, YKCE…RQVH, YACS…KEAH, and YGCD…KLVH. The segment at 459–486 is disordered; sequence AAHAPPVATEPAKDGAASVPQPPPPFPP. The disordered stretch occupies residues 721–743; sequence LLAPTPSGPQSSDGGSSGGGTDA. C2H2-type zinc fingers lie at residues 791–813, 819–841, 847–869, 875–897, 903–925, 931–953, 959–981, 988–1010, and 1016–1038; these read FSCA…KYVH, LGCG…RRSH, FRCP…QRCH, YRCG…RVVH, FKCG…RRLH, QRCG…QRLH, YRCE…QRAH, LRCP…LAAH, and FRCS…RLMH. A Glycyl lysine isopeptide (Lys-Gly) (interchain with G-Cter in SUMO2) cross-link involves residue Lys801. Lys1039 participates in a covalent cross-link: Glycyl lysine isopeptide (Lys-Gly) (interchain with G-Cter in SUMO2).

It belongs to the krueppel C2H2-type zinc-finger protein family.

The protein localises to the nucleus. In terms of biological role, may be involved in transcriptional regulation. This chain is Zinc finger protein 865 (Znf865), found in Mus musculus (Mouse).